A 435-amino-acid polypeptide reads, in one-letter code: 4-hydroxy-3-methylbut-2-en-1-yl diphosphate synthase (flavodoxin) (435 aa).

Residues 1–15 show a composition bias toward basic and acidic residues; that stretch reads MTDVDLRARPQEGMK. Residues 1–24 form a disordered region; it reads MTDVDLRARPQEGMKEIPAGPKGR. [4Fe-4S] cluster-binding residues include Cys316, Cys319, Cys362, and Glu369.

It belongs to the IspG family. [4Fe-4S] cluster serves as cofactor.

It catalyses the reaction (2E)-4-hydroxy-3-methylbut-2-enyl diphosphate + oxidized [flavodoxin] + H2O + 2 H(+) = 2-C-methyl-D-erythritol 2,4-cyclic diphosphate + reduced [flavodoxin]. It participates in isoprenoid biosynthesis; isopentenyl diphosphate biosynthesis via DXP pathway; isopentenyl diphosphate from 1-deoxy-D-xylulose 5-phosphate: step 5/6. Its function is as follows. Converts 2C-methyl-D-erythritol 2,4-cyclodiphosphate (ME-2,4cPP) into 1-hydroxy-2-methyl-2-(E)-butenyl 4-diphosphate. This chain is 4-hydroxy-3-methylbut-2-en-1-yl diphosphate synthase (flavodoxin), found in Afipia carboxidovorans (strain ATCC 49405 / DSM 1227 / KCTC 32145 / OM5) (Oligotropha carboxidovorans).